A 400-amino-acid chain; its full sequence is tRNA(Met) cytidine acetate ligase (400 aa).

Residues 7–20 (IVEYNPFHNGHLYH), Gly101, Asn159, and 184–185 (RI) each bind ATP.

This sequence belongs to the TmcAL family.

The protein localises to the cytoplasm. The catalysed reaction is cytidine(34) in elongator tRNA(Met) + acetate + ATP = N(4)-acetylcytidine(34) in elongator tRNA(Met) + AMP + diphosphate. Its function is as follows. Catalyzes the formation of N(4)-acetylcytidine (ac(4)C) at the wobble position of elongator tRNA(Met), using acetate and ATP as substrates. First activates an acetate ion to form acetyladenylate (Ac-AMP) and then transfers the acetyl group to tRNA to form ac(4)C34. This is tRNA(Met) cytidine acetate ligase from Caldicellulosiruptor bescii (strain ATCC BAA-1888 / DSM 6725 / KCTC 15123 / Z-1320) (Anaerocellum thermophilum).